A 334-amino-acid chain; its full sequence is Iron-uptake system permease protein FeuB (334 aa).

Helical transmembrane passes span 9-29 (IILI…ILYG), 63-83 (AAGA…MQGI), 91-111 (PSIM…MVLL), 119-139 (MMIY…GLAA), 150-170 (LAII…AMSI), 191-211 (PDFL…AISL), 243-263 (VIIL…VGLV), 281-301 (PCSC…SRFI), and 305-325 (FETP…LYLI).

The protein belongs to the binding-protein-dependent transport system permease family. FecCD subfamily. In terms of assembly, the complex is composed of one ATP-binding protein (YusV), two transmembrane proteins (FeuB and FeuC) and a solute-binding protein (FeuA).

Its subcellular location is the cell membrane. The protein resides in the membrane raft. Its function is as follows. Involved in the uptake of iron. Probably responsible for the translocation of the substrate across the membrane. In terms of biological role, part of the ABC transporter complex FeuABC/YusV involved in import of the catecholate siderophores bacillibactin and enterobactin. The polypeptide is Iron-uptake system permease protein FeuB (feuB) (Bacillus subtilis (strain 168)).